We begin with the raw amino-acid sequence, 388 residues long: S-adenosylmethionine synthase (388 aa).

Residue H14 coordinates ATP. Mg(2+) is bound at residue D16. E42 serves as a coordination point for K(+). Residues E55 and Q98 each coordinate L-methionine. A flexible loop region spans residues 98 to 108 (QSAEISSAVDQ). ATP contacts are provided by residues 166–168 (DGK), D242, 248–249 (RK), A265, and K269. D242 lines the L-methionine pocket. K273 is a binding site for L-methionine.

Belongs to the AdoMet synthase family. Homotetramer; dimer of dimers. The cofactor is Mg(2+). Requires K(+) as cofactor.

It is found in the cytoplasm. The catalysed reaction is L-methionine + ATP + H2O = S-adenosyl-L-methionine + phosphate + diphosphate. The protein operates within amino-acid biosynthesis; S-adenosyl-L-methionine biosynthesis; S-adenosyl-L-methionine from L-methionine: step 1/1. Functionally, catalyzes the formation of S-adenosylmethionine (AdoMet) from methionine and ATP. The overall synthetic reaction is composed of two sequential steps, AdoMet formation and the subsequent tripolyphosphate hydrolysis which occurs prior to release of AdoMet from the enzyme. In Oenococcus oeni (strain ATCC BAA-331 / PSU-1), this protein is S-adenosylmethionine synthase.